Here is a 140-residue protein sequence, read N- to C-terminus: Ergosterol biosynthetic protein 28 homolog (140 aa).

4 consecutive transmembrane segments (helical) span residues 4–24, 52–72, 79–99, and 105–125; these read FLNV…GNTL, TFGI…IDIH, ITLW…FVFG, and VGVL…LVGL.

Belongs to the ERG28 family.

It localises to the endoplasmic reticulum membrane. This is Ergosterol biosynthetic protein 28 homolog from Mus musculus (Mouse).